Consider the following 145-residue polypeptide: Large ribosomal subunit protein uL15 (145 aa).

The interval methionine 1–serine 42 is disordered. Over residues arginine 13–glycine 26 the composition is skewed to basic residues.

Belongs to the universal ribosomal protein uL15 family. Part of the 50S ribosomal subunit.

Functionally, binds to the 23S rRNA. In Metamycoplasma arthritidis (strain 158L3-1) (Mycoplasma arthritidis), this protein is Large ribosomal subunit protein uL15.